The chain runs to 518 residues: Tyrosine/DOPA decarboxylase 1 (518 aa).

K321 carries the N6-(pyridoxal phosphate)lysine modification.

Belongs to the group II decarboxylase family. Homodimer. Pyridoxal 5'-phosphate is required as a cofactor. Predominantly expressed in the roots.

It carries out the reaction L-tyrosine + H(+) = tyramine + CO2. The catalysed reaction is L-dopa + H(+) = dopamine + CO2. The enzyme catalyses 5-hydroxy-L-tryptophan + H(+) = serotonin + CO2. In terms of biological role, marginally higher substrate specificity for L-DOPA over L-tyrosine. The polypeptide is Tyrosine/DOPA decarboxylase 1 (TYDC1) (Papaver somniferum (Opium poppy)).